Reading from the N-terminus, the 84-residue chain is Large ribosomal subunit protein bL27 (84 aa).

The disordered stretch occupies residues M1–A27.

This sequence belongs to the bacterial ribosomal protein bL27 family.

The polypeptide is Large ribosomal subunit protein bL27 (Chlamydia pneumoniae (Chlamydophila pneumoniae)).